Consider the following 164-residue polypeptide: Ribosome maturation factor RimM (164 aa).

Residues 90–161 form the PRC barrel domain; that stretch reads EGRYYVADII…EIIIKPVKTW (72 aa).

The protein belongs to the RimM family. In terms of assembly, binds ribosomal protein uS19.

It is found in the cytoplasm. An accessory protein needed during the final step in the assembly of 30S ribosomal subunit, possibly for assembly of the head region. Essential for efficient processing of 16S rRNA. May be needed both before and after RbfA during the maturation of 16S rRNA. It has affinity for free ribosomal 30S subunits but not for 70S ribosomes. This chain is Ribosome maturation factor RimM, found in Clostridium tetani (strain Massachusetts / E88).